A 150-amino-acid polypeptide reads, in one-letter code: Cytochrome c-type biogenesis protein CcmE (150 aa).

Residues 1–9 (MRNLKKTRR) are Cytoplasmic-facing. A helical; Signal-anchor for type II membrane protein membrane pass occupies residues 10–30 (IQILLVAGGALVLSTALIGYG). Topologically, residues 31-150 (MRDGINFFRA…VYRDPAQPEG (120 aa)) are periplasmic. Positions 123 and 127 each coordinate heme.

It belongs to the CcmE/CycJ family.

It localises to the cell inner membrane. Functionally, heme chaperone required for the biogenesis of c-type cytochromes. Transiently binds heme delivered by CcmC and transfers the heme to apo-cytochromes in a process facilitated by CcmF and CcmH. The polypeptide is Cytochrome c-type biogenesis protein CcmE (Rhodobacter capsulatus (strain ATCC BAA-309 / NBRC 16581 / SB1003)).